Here is a 463-residue protein sequence, read N- to C-terminus: MSPPRKLHIKSYGCQMNVYDAQRMVDALAPEGFVETANVDDADLVILNTCHIREKASEKVYSELGRLRVARDEAANHGRRMQIAVAGCVAQAEGAEIIRRAPVVDVVVGPQSYHNLPQLLAKAEQHGRALETEFPIEDKFGVLPQPAPDAIRARGISAFVTVQEGCDKFCTFCVVPYTRGAEMSRPVAAIVEDVKRLAENGVREVTLIGQNVNAYHGDGPDRLAWSLGRLVRRLAEIPGIVRLRYSTSHPNDVNDDLLAAHRDLPALMPFVHLPVQSGSDRILAAMNRKHTADDYRRVIDRFRLASEAIAFSSDFIVGFPGETERDFSATLALVAQIGYAGAYSFKYSPRPGTPAADMAEMVPAAVMDERLEQLQQLIDQQQSAFNKAAIGRTVEVLFERAGRKPGQIVGRTAYLQPAHVMAPDSIIGKVLPVRVDSLERYSLLGELASATSRPADAMAATGA.

One can recognise an MTTase N-terminal domain in the interval 5 to 125; it reads RKLHIKSYGC…LPQLLAKAEQ (121 aa). [4Fe-4S] cluster-binding residues include Cys14, Cys50, Cys88, Cys166, Cys170, and Cys173. Residues 152 to 384 form the Radical SAM core domain; it reads RARGISAFVT…QQLIDQQQSA (233 aa). The TRAM domain maps to 387–449; sequence KAAIGRTVEV…RYSLLGELAS (63 aa).

The protein belongs to the methylthiotransferase family. MiaB subfamily. Monomer. [4Fe-4S] cluster serves as cofactor.

The protein localises to the cytoplasm. The catalysed reaction is N(6)-dimethylallyladenosine(37) in tRNA + (sulfur carrier)-SH + AH2 + 2 S-adenosyl-L-methionine = 2-methylsulfanyl-N(6)-dimethylallyladenosine(37) in tRNA + (sulfur carrier)-H + 5'-deoxyadenosine + L-methionine + A + S-adenosyl-L-homocysteine + 2 H(+). Catalyzes the methylthiolation of N6-(dimethylallyl)adenosine (i(6)A), leading to the formation of 2-methylthio-N6-(dimethylallyl)adenosine (ms(2)i(6)A) at position 37 in tRNAs that read codons beginning with uridine. This chain is tRNA-2-methylthio-N(6)-dimethylallyladenosine synthase, found in Rhodopseudomonas palustris (strain ATCC BAA-98 / CGA009).